The primary structure comprises 294 residues: Ventral anterior homeobox 2b (294 aa).

Positions 1 to 10 (MGDGVSEERS) are enriched in basic and acidic residues. 5 disordered regions span residues 1–27 (MGDG…VRDR), 43–65 (KDIP…DSQS), 149–168 (RRTK…SSST), 190–223 (PAPP…PVIS), and 272–294 (SSAF…KSTS). The homeobox DNA-binding region spans 98 to 157 (PKRTRTSFTAEQLYRLELEFQRCQYVVGRERTELARQLNLSETQVKVWFQNRRTKQKKDQ). Residues 154–165 (KKDQSRDSEKRS) show a composition bias toward basic and acidic residues. Residues 197 to 219 (SSQNNMGTSSGNGTSLGTSGSTS) are compositionally biased toward low complexity. A compositionally biased stretch (basic and acidic residues) spans 279–288 (TRLDRKDTAS).

It belongs to the EMX homeobox family.

Its subcellular location is the nucleus. Transcription factor that may function in dorsoventral specification of the forebrain. Regulates the expression of Wnt signaling antagonists. This is Ventral anterior homeobox 2b (vax2-b) from Xenopus laevis (African clawed frog).